Consider the following 200-residue polypeptide: Glycosyl hydrolase family 19 domain-containing protein HI_1415 (200 aa).

This sequence belongs to the glycosyl hydrolase 19 family.

The chain is Glycosyl hydrolase family 19 domain-containing protein HI_1415 from Haemophilus influenzae (strain ATCC 51907 / DSM 11121 / KW20 / Rd).